The following is a 100-amino-acid chain: Urease subunit gamma (100 aa).

The protein belongs to the urease gamma subunit family. In terms of assembly, heterotrimer of UreA (gamma), UreB (beta) and UreC (alpha) subunits. Three heterotrimers associate to form the active enzyme.

It localises to the cytoplasm. It catalyses the reaction urea + 2 H2O + H(+) = hydrogencarbonate + 2 NH4(+). It participates in nitrogen metabolism; urea degradation; CO(2) and NH(3) from urea (urease route): step 1/1. This chain is Urease subunit gamma, found in Burkholderia orbicola (strain MC0-3).